Consider the following 639-residue polypeptide: MCRRAPRSIPLRCAHAPRRDVYQEIPISSFADQTFTAPAQIRNFCIIAHIDHGKSTLADRMLGITGVVADRDMRAQYLDRMDIERERGITIKAQNVRLPWEVNGEKFVLHLIDTPGHVDFTYEVSRALEACEGAILLVDAAQGIEAQTLANLYLALDRDLAIIPVLNKIDLPAADPDRYAGELAHIIGCEPSDVLRVSGKTGAGVRELLDEVVRLVPPPTGDADAPARAMIFDSVYDIYRGVVTYVRVVDGKITPRERIAMMSTGATHELLEVGIVSPDPKPSAGLGVGEVGYLITGVKDVRQSKVGDTVTTARHGAKEALTGYREPRPMVYSGLYPVDGSDYPVLREALDKLQLNDAALTYEPETSVALGFGFRCGFLGLLHMEITRERLEREFNLDLISTAPNVVYRVEKDDGTEIVVTNPSDWPEGKVRTVYEPVVKTTVIAPSEFIGTIMELCQSRRGELGGMDYLSPERVELRYTMPLGEIIFDFFDSLKSRTRGYASLDYEEAGEQEADLVKVDILLQGEAVDAFSAIVHKDGASAYGNKMTTKLKELIPRQQFEVPVQAAVGSRIIARENIRAIRKDVLSKCYGGDITRKRKLLEKQKEGKKRMKTIGRVDVPQEAFVAALSTDAAGDKPKK.

The 182-residue stretch at 39–220 (AQIRNFCIIA…EVVRLVPPPT (182 aa)) folds into the tr-type G domain. GTP-binding positions include 51-56 (DHGKST) and 167-170 (NKID).

The protein belongs to the TRAFAC class translation factor GTPase superfamily. Classic translation factor GTPase family. LepA subfamily.

Its subcellular location is the cell membrane. The catalysed reaction is GTP + H2O = GDP + phosphate + H(+). Functionally, required for accurate and efficient protein synthesis under certain stress conditions. May act as a fidelity factor of the translation reaction, by catalyzing a one-codon backward translocation of tRNAs on improperly translocated ribosomes. Back-translocation proceeds from a post-translocation (POST) complex to a pre-translocation (PRE) complex, thus giving elongation factor G a second chance to translocate the tRNAs correctly. Binds to ribosomes in a GTP-dependent manner. The protein is Elongation factor 4 of Mycobacterium sp. (strain JLS).